We begin with the raw amino-acid sequence, 117 residues long: uncharacterized protein (117 aa).

An N-terminal signal peptide occupies residues 1 to 18 (MKFFWVSSLLGLLGLSTA). N-linked (GlcNAc...) asparagine glycosylation occurs at Asn-86.

This is an uncharacterized protein from Schizosaccharomyces pombe (strain 972 / ATCC 24843) (Fission yeast).